Reading from the N-terminus, the 252-residue chain is Fatty acid elongase 4 (252 aa).

Residues Leu25–Met45 traverse the membrane as a helical segment. Asn56 carries an N-linked (GlcNAc...) asparagine glycan. A helical membrane pass occupies residues Val60–Ser80. N-linked (GlcNAc...) asparagine glycosylation occurs at Asn89. The next 5 helical transmembrane spans lie at Phe100–Leu120, Gln127–Leu147, Gly150–Met170, Phe187–Val207, and Phe214–Leu234. The short motif at His132–His136 is the HxxHH motif element. The active-site Nucleophile is His135.

The protein belongs to the ELO family.

The protein resides in the membrane. It catalyses the reaction (5Z,8Z,11Z,14Z)-eicosatetraenoyl-CoA + malonyl-CoA + H(+) = (7Z,10Z,13Z,16Z)-3-oxodocosatetraenoyl-CoA + CO2 + CoA. The protein operates within lipid metabolism; fatty acid biosynthesis. Functionally, involved in the synthesis of fatty acids. Elongates arachidonate and other C20 polyunsaturated fatty acids (PUFAs) with a preference for n-6 PUFAs. Not involved in fatty acid synthesis up to C18. This chain is Fatty acid elongase 4, found in Trypanosoma brucei brucei (strain 927/4 GUTat10.1).